We begin with the raw amino-acid sequence, 362 residues long: Phospho-N-acetylmuramoyl-pentapeptide-transferase (362 aa).

The next 10 membrane-spanning stretches (helical) occupy residues 28–48 (GAVLTALIVAFLVGPRIIAWL), 75–95 (TMGGFMILLALSVSTLLWADL), 100–120 (VWIVLLVTLGYGLIGFWDDYL), 134–154 (AKLVAEIAIALAAAAWVWSLQ), 170–190 (VLLQLSWFYLPFAVFIIVGAG), 201–221 (GLAIVPVMIASGVFAIFSYLV), 241–261 (LAVFCGALVGAGLGFLWFNAP), 265–285 (VFMGDTGSLALGGALGAISVV), 290–310 (LVLGIVGGLFVLETVSVIVQV), and 339–359 (TVVIRFWIIATILALAGLATL).

This sequence belongs to the glycosyltransferase 4 family. MraY subfamily. Mg(2+) serves as cofactor.

It is found in the cell inner membrane. It catalyses the reaction UDP-N-acetyl-alpha-D-muramoyl-L-alanyl-gamma-D-glutamyl-meso-2,6-diaminopimeloyl-D-alanyl-D-alanine + di-trans,octa-cis-undecaprenyl phosphate = di-trans,octa-cis-undecaprenyl diphospho-N-acetyl-alpha-D-muramoyl-L-alanyl-D-glutamyl-meso-2,6-diaminopimeloyl-D-alanyl-D-alanine + UMP. The protein operates within cell wall biogenesis; peptidoglycan biosynthesis. Catalyzes the initial step of the lipid cycle reactions in the biosynthesis of the cell wall peptidoglycan: transfers peptidoglycan precursor phospho-MurNAc-pentapeptide from UDP-MurNAc-pentapeptide onto the lipid carrier undecaprenyl phosphate, yielding undecaprenyl-pyrophosphoryl-MurNAc-pentapeptide, known as lipid I. The chain is Phospho-N-acetylmuramoyl-pentapeptide-transferase from Paramagnetospirillum magneticum (strain ATCC 700264 / AMB-1) (Magnetospirillum magneticum).